Reading from the N-terminus, the 654-residue chain is 4-hydroxy-3-methylbut-2-en-1-yl diphosphate synthase (flavodoxin) (654 aa).

Residues cysteine 557, cysteine 560, cysteine 591, and glutamate 598 each contribute to the [4Fe-4S] cluster site.

Belongs to the IspG family. The cofactor is [4Fe-4S] cluster.

It catalyses the reaction (2E)-4-hydroxy-3-methylbut-2-enyl diphosphate + oxidized [flavodoxin] + H2O + 2 H(+) = 2-C-methyl-D-erythritol 2,4-cyclic diphosphate + reduced [flavodoxin]. It functions in the pathway isoprenoid biosynthesis; isopentenyl diphosphate biosynthesis via DXP pathway; isopentenyl diphosphate from 1-deoxy-D-xylulose 5-phosphate: step 5/6. Its function is as follows. Converts 2C-methyl-D-erythritol 2,4-cyclodiphosphate (ME-2,4cPP) into 1-hydroxy-2-methyl-2-(E)-butenyl 4-diphosphate. The protein is 4-hydroxy-3-methylbut-2-en-1-yl diphosphate synthase (flavodoxin) of Protochlamydia amoebophila (strain UWE25).